Reading from the N-terminus, the 58-residue chain is Ribosome modulation factor (58 aa).

The protein belongs to the ribosome modulation factor family.

The protein resides in the cytoplasm. Functionally, during stationary phase, converts 70S ribosomes to an inactive dimeric form (100S ribosomes). This is Ribosome modulation factor from Tolumonas auensis (strain DSM 9187 / NBRC 110442 / TA 4).